The chain runs to 526 residues: Peptide chain release factor 3 (526 aa).

Residues S8–Q277 form the tr-type G domain. GTP contacts are provided by residues S17–T24, D85–H89, and N139–D142.

Belongs to the TRAFAC class translation factor GTPase superfamily. Classic translation factor GTPase family. PrfC subfamily.

Its subcellular location is the cytoplasm. Increases the formation of ribosomal termination complexes and stimulates activities of RF-1 and RF-2. It binds guanine nucleotides and has strong preference for UGA stop codons. It may interact directly with the ribosome. The stimulation of RF-1 and RF-2 is significantly reduced by GTP and GDP, but not by GMP. The sequence is that of Peptide chain release factor 3 from Vibrio atlanticus (strain LGP32) (Vibrio splendidus (strain Mel32)).